A 442-amino-acid polypeptide reads, in one-letter code: DNA topoisomerase medium subunit (442 aa).

Residues 29–438 enclose the Topo IIA-type catalytic domain; the sequence is IPNMIDGFKP…DVVTEYTKDL (410 aa). Tyr-117 acts as the O-(5'-phospho-DNA)-tyrosine intermediate in catalysis.

This sequence belongs to the type II topoisomerase family. As to quaternary structure, part of the DNA topoisomerase complex made of gp39, gp52 and gp60. Mg(2+) serves as cofactor.

The enzyme catalyses ATP-dependent breakage, passage and rejoining of double-stranded DNA.. Its function is as follows. Medium subunit of the DNA topoisomerase that untwists superhelical DNA. Controls topological states of double-stranded DNA by transient breakage and subsequent rejoining of DNA strands. The protein is DNA topoisomerase medium subunit (52) of Enterobacteria phage T4 (Bacteriophage T4).